Consider the following 180-residue polypeptide: NAD(P)H-quinone oxidoreductase subunit I, chloroplastic (180 aa).

4Fe-4S ferredoxin-type domains lie at 55–84 and 95–124; these read GRIH…VDWR and LNYS…MTEE. Cys64, Cys67, Cys70, Cys74, Cys104, Cys107, Cys110, and Cys114 together coordinate [4Fe-4S] cluster.

This sequence belongs to the complex I 23 kDa subunit family. NDH is composed of at least 16 different subunits, 5 of which are encoded in the nucleus. [4Fe-4S] cluster is required as a cofactor.

The protein localises to the plastid. The protein resides in the chloroplast thylakoid membrane. It carries out the reaction a plastoquinone + NADH + (n+1) H(+)(in) = a plastoquinol + NAD(+) + n H(+)(out). The enzyme catalyses a plastoquinone + NADPH + (n+1) H(+)(in) = a plastoquinol + NADP(+) + n H(+)(out). Functionally, NDH shuttles electrons from NAD(P)H:plastoquinone, via FMN and iron-sulfur (Fe-S) centers, to quinones in the photosynthetic chain and possibly in a chloroplast respiratory chain. The immediate electron acceptor for the enzyme in this species is believed to be plastoquinone. Couples the redox reaction to proton translocation, and thus conserves the redox energy in a proton gradient. In Dioscorea elephantipes (Elephant's foot yam), this protein is NAD(P)H-quinone oxidoreductase subunit I, chloroplastic.